We begin with the raw amino-acid sequence, 1084 residues long: Probable sucrose-phosphate synthase 1 (1084 aa).

Gly residues predominate over residues 25–46 (GGGGGGGGGGGGGGGGGGGGGV). The tract at residues 25–61 (GGGGGGGGGGGGGGGGGGGGGVDPRSPAAGAASPRGP) is disordered. The span at 48–61 (PRSPAAGAASPRGP) shows a compositional bias: low complexity.

Belongs to the glycosyltransferase 1 family. Homodimer or homotetramer. As to expression, expressed in leaves mesophyll cells, scutellum of germinating seedlings and pollen of immature inflorescences.

The catalysed reaction is beta-D-fructose 6-phosphate + UDP-alpha-D-glucose = sucrose 6(F)-phosphate + UDP + H(+). It functions in the pathway glycan biosynthesis; sucrose biosynthesis; sucrose from D-fructose 6-phosphate and UDP-alpha-D-glucose: step 1/2. Its activity is regulated as follows. Activity is regulated by phosphorylation and moderated by concentration of metabolites and light. Functionally, plays a role in photosynthetic sucrose synthesis by catalyzing the rate-limiting step of sucrose biosynthesis from UDP-glucose and fructose- 6-phosphate. Involved in the regulation of carbon partitioning in the leaves of plants. May regulate the synthesis of sucrose and therefore play a major role as a limiting factor in the export of photoassimilates out of the leaf. Plays a role for sucrose availability that is essential for plant growth and fiber elongation. The protein is Probable sucrose-phosphate synthase 1 (SPS1) of Oryza sativa subsp. indica (Rice).